Here is a 566-residue protein sequence, read N- to C-terminus: Urease subunit beta (566 aa).

In terms of domain architecture, Urease spans 129–566; sequence GGIDTHIHFI…VPMARRYFMF (438 aa). Positions 134, 136, and 217 each coordinate Ni(2+). Residue Lys217 is modified to N6-carboxylysine. Position 219 (His219) interacts with substrate. Positions 246 and 272 each coordinate Ni(2+). His320 serves as the catalytic Proton donor. Asp360 serves as a coordination point for Ni(2+).

Belongs to the metallo-dependent hydrolases superfamily. Urease alpha subunit family. As to quaternary structure, heterohexamer of 3 UreA (alpha) and 3 UreB (beta) subunits. Ni cation is required as a cofactor. Carboxylation allows a single lysine to coordinate two nickel ions.

The protein localises to the cytoplasm. It catalyses the reaction urea + 2 H2O + H(+) = hydrogencarbonate + 2 NH4(+). It functions in the pathway nitrogen metabolism; urea degradation; CO(2) and NH(3) from urea (urease route): step 1/1. The sequence is that of Urease subunit beta from Aliarcobacter butzleri (strain RM4018) (Arcobacter butzleri).